A 545-amino-acid polypeptide reads, in one-letter code: MVTIEALPLRPIEGEQQALHVGAHSSASDPRRTMVTNTSESPLASRQATLTTSTRQKHTSYRLNTAFFLFGLLNNSLYVVILTAALELLPQGVPTGLVSFANIFPALIAKAIWPYFLRGQVRYSKRVWSCAALSFIGMLLVSFFPALAMRLVGISLASFSSGLGELTFLQLSTRYAPKSSETRSGLTAAQAAGAGLETSFAGDAVGWFASGTGAAGLIGAAAWWVVRPLGVQTGMAILSVLPAFMIMAYAIILPSVQELLEGKDGKGGAMYAPLSTEDDAVERSSSDDQPTTANDDRQDSTIHIGPGSEQDVKVRLSFQEKMALLKPMLQPYIIPLVIVYAMEYTINQGIAPTLIYPLPTRSSHPLLSHIIRKLTDYYPLYQLVYQTFVFLSRSSISIFKLPAIPRHLLWLPAVLQTGLLAVLLTESLYAWFRESIASPLVIVLICVEGLAGGSAYVSVFYSIGVDEQGRGIALPSTGEEVDDEGQEEDSAYTMAKKAQEHEFRIGCVGFGDSLGILAASLISMPLQVSLCDAQVRSGRDLCKQT.

A disordered region spans residues 23–49 (AHSSASDPRRTMVTNTSESPLASRQAT). Residues 34–49 (MVTNTSESPLASRQAT) are compositionally biased toward polar residues. The next 5 helical transmembrane spans lie at 66–86 (AFFLFGLLNNSLYVVILTAAL), 97–117 (LVSFANIFPALIAKAIWPYFL), 127–147 (VWSCAALSFIGMLLVSFFPAL), 205–225 (VGWFASGTGAAGLIGAAAWWV), and 234–254 (GMAILSVLPAFMIMAYAIILP). The interval 276-304 (TEDDAVERSSSDDQPTTANDDRQDSTIHI) is disordered. 3 helical membrane-spanning segments follow: residues 322 to 342 (MALLKPMLQPYIIPLVIVYAM), 408 to 428 (LLWLPAVLQTGLLAVLLTESL), and 440 to 460 (LVIVLICVEGLAGGSAYVSVF).

This sequence belongs to the battenin family.

Its subcellular location is the vacuole membrane. Involved in vacuolar transport and vacuole pH homeostasis. Also required for cytokinesis. This is Protein BTN1 (BTN1) from Mycosarcoma maydis (Corn smut fungus).